The sequence spans 333 residues: G-protein coupled receptor 146 (333 aa).

Over 1–22 the chain is Extracellular; the sequence is MWSCGPLNSTAWAEEPLCRNLR. Asn8 carries an N-linked (GlcNAc...) asparagine glycan. The helical transmembrane segment at 23 to 43 threads the bilayer; it reads LGLWVLSLLYLGAGVPVSLGY. Over 44-64 the chain is Cytoplasmic; it reads NALLVLANLASKNTMTMPDVY. Residues 65-85 form a helical membrane-spanning segment; it reads FVNMAVAGLVLTALAPAYLLG. Residues 86-101 lie on the Extracellular side of the membrane; sequence PAHSRWALWSLSSEAH. Residues 102–122 traverse the membrane as a helical segment; it reads VTLLILFNVASLVTMYSTALL. At 123 to 145 the chain is on the cytoplasmic side; sequence SLDYYIERALPRTYMASVYNTRH. Residues 146–166 traverse the membrane as a helical segment; it reads VCGFVWGGAVLTSFSSLLFYI. Residues 167–188 lie on the Extracellular side of the membrane; it reads CSHVSSRIAECARMQNTEAADA. Residues 189-209 traverse the membrane as a helical segment; it reads ILVLIGYVVPGLAVLYALALI. At 210–232 the chain is on the cytoplasmic side; that stretch reads SRIGKEDTPLDQDTSRLDPSVHR. Residues 233-253 traverse the membrane as a helical segment; sequence LLVATVCTQFGLWTPYYLSLG. Topologically, residues 254 to 277 are extracellular; that stretch reads HTVLTSRGRTVEGHYLGILQVAKD. Residues 278–298 form a helical membrane-spanning segment; it reads LAKFLAFSSSSVTPLLYRYIN. Over 299–333 the chain is Cytoplasmic; it reads KAFPGKLRRLMKKMHCGRRHCSPDPSGIQQVMAQA.

Belongs to the G-protein coupled receptor 1 family.

The protein resides in the cell membrane. GPCR receptor required for the regulation of plasma cholesterol levels. Receptor for CHLSN, a gut derived hormone which mediates an inhibitory effect of intestinal cholesterol absorption on hepatic cholesterol synthesis. Cholesin-binding exerts an antagonistic effect by inhibiting PKA signaling and suppressing SREBF2-controlled cholesterol in the liver. This is G-protein coupled receptor 146 (Gpr146) from Mus musculus (Mouse).